Here is a 138-residue protein sequence, read N- to C-terminus: MAPK kinase substrate protein At1g80180 (138 aa).

The tract at residues 52–138 (TSEVQDQTTK…RKRPAKRRSR (87 aa)) is disordered. The span at 69–81 (KPIRTDGGMERSR) shows a compositional bias: basic and acidic residues. Ser-98 carries the phosphoserine modification. Ser-105 bears the Phosphoserine; by MAPK6 mark. Residues 121–138 (QPGKKVNQRKRPAKRRSR) show a composition bias toward basic residues.

As to expression, expressed in developing cotyledons, mature cotyledons, cotyledon epidermis and stomata.

In terms of biological role, may play a role in the regulation of stomata patterning. This is MAPK kinase substrate protein At1g80180 from Arabidopsis thaliana (Mouse-ear cress).